The following is a 380-amino-acid chain: 3-dehydroquinate synthase (380 aa).

Belongs to the archaeal-type DHQ synthase family.

It carries out the reaction 2-amino-2,3,7-trideoxy-D-lyxo-hept-6-ulosonate + NAD(+) + H2O = 3-dehydroquinate + NH4(+) + NADH + H(+). In terms of biological role, catalyzes the oxidative deamination and cyclization of 2-amino-3,7-dideoxy-D-threo-hept-6-ulosonic acid (ADH) to yield 3-dehydroquinate (DHQ), which is fed into the canonical shikimic pathway of aromatic amino acid biosynthesis. This chain is 3-dehydroquinate synthase, found in Methanosarcina acetivorans (strain ATCC 35395 / DSM 2834 / JCM 12185 / C2A).